We begin with the raw amino-acid sequence, 255 residues long: Major prion protein (255 aa).

An N-terminal signal peptide occupies residues 1 to 24 (MVKSHIGSWILVLFVAMWSDVGLC). Positions 25–41 (KKRPKPGGGWNTGGSRY) are interaction with ADGRG6. Residues 25-232 (KKRPKPGGGW…ESEAYYQRGA (208 aa)) are interaction with GRB2, ERI3 and SYN1. The disordered stretch occupies residues 28–110 (PKPGGGWNTG…QWNKPSKPKT (83 aa)). 5 repeat units span residues 54–62 (PQGGGGWGQ), 63–70 (PHGGGWGQ), 71–78 (PHGGGWGQ), 79–86 (PHGGGWGQ), and 87–94 (PHGGGGWG). Positions 54-94 (PQGGGGWGQPHGGGWGQPHGGGWGQPHGGGWGQPHGGGGWG) are 5 X 8 AA tandem repeats of P-H-G-G-G-W-G-Q. Over residues 55 to 97 (QGGGGWGQPHGGGWGQPHGGGWGQPHGGGWGQPHGGGGWGQGG) the composition is skewed to gly residues. Cu(2+) contacts are provided by histidine 64, glycine 65, glycine 66, histidine 72, glycine 73, glycine 74, histidine 80, glycine 81, glycine 82, histidine 88, glycine 90, and glycine 91. Asparagine 174, asparagine 184, and asparagine 199 each carry an N-linked (GlcNAc...) asparagine glycan. Cysteine 182 and cysteine 216 are oxidised to a cystine. Alanine 232 is lipidated: GPI-anchor amidated alanine. Residues 233 to 255 (SVILFSSPPVILLVSFLIFLIVG) constitute a propeptide, removed in mature form.

Belongs to the prion family. Monomer and homodimer. Has a tendency to aggregate into amyloid fibrils containing a cross-beta spine, formed by a steric zipper of superposed beta-strands. Soluble oligomers may represent an intermediate stage on the path to fibril formation. Copper binding may promote oligomerization. Interacts with GRB2, APP, ERI3/PRNPIP and SYN1. Mislocalized cytosolically exposed PrP interacts with MGRN1; this interaction alters MGRN1 subcellular location and causes lysosomal enlargement. Interacts with APP. Interacts with KIAA1191. Interacts with ADGRG6.

Its subcellular location is the cell membrane. The protein localises to the golgi apparatus. Functionally, its primary physiological function is unclear. May play a role in neuronal development and synaptic plasticity. May be required for neuronal myelin sheath maintenance. May promote myelin homeostasis through acting as an agonist for ADGRG6 receptor. May play a role in iron uptake and iron homeostasis. Soluble oligomers are toxic to cultured neuroblastoma cells and induce apoptosis (in vitro). Association with GPC1 (via its heparan sulfate chains) targets PRNP to lipid rafts. Also provides Cu(2+) or Zn(2+) for the ascorbate-mediated GPC1 deaminase degradation of its heparan sulfate side chains. This chain is Major prion protein (PRNP), found in Canis lupus familiaris (Dog).